The primary structure comprises 439 residues: Ribosomal protein uS12 methylthiotransferase RimO (439 aa).

One can recognise an MTTase N-terminal domain in the interval 2-114; that stretch reads SKLYLMSLGC…VDEMILKKTN (113 aa). Positions 11, 45, 77, 146, 150, and 153 each coordinate [4Fe-4S] cluster. The Radical SAM core domain maps to 132–363; sequence TGSNSHAFIK…VNEVIEKSFE (232 aa).

The protein belongs to the methylthiotransferase family. RimO subfamily. Requires [4Fe-4S] cluster as cofactor.

It is found in the cytoplasm. The catalysed reaction is L-aspartate(89)-[ribosomal protein uS12]-hydrogen + (sulfur carrier)-SH + AH2 + 2 S-adenosyl-L-methionine = 3-methylsulfanyl-L-aspartate(89)-[ribosomal protein uS12]-hydrogen + (sulfur carrier)-H + 5'-deoxyadenosine + L-methionine + A + S-adenosyl-L-homocysteine + 2 H(+). Functionally, catalyzes the methylthiolation of an aspartic acid residue of ribosomal protein uS12. This Campylobacter jejuni (strain RM1221) protein is Ribosomal protein uS12 methylthiotransferase RimO.